A 255-amino-acid polypeptide reads, in one-letter code: Methylthioribulose-1-phosphate dehydratase (255 aa).

Cys111 provides a ligand contact to substrate. Residues His128 and His130 each contribute to the Zn(2+) site. Residue Glu157 is the Proton donor/acceptor of the active site. His213 provides a ligand contact to Zn(2+).

Belongs to the aldolase class II family. MtnB subfamily. Zn(2+) is required as a cofactor.

Its subcellular location is the cytoplasm. It carries out the reaction 5-(methylsulfanyl)-D-ribulose 1-phosphate = 5-methylsulfanyl-2,3-dioxopentyl phosphate + H2O. Its pathway is amino-acid biosynthesis; L-methionine biosynthesis via salvage pathway; L-methionine from S-methyl-5-thio-alpha-D-ribose 1-phosphate: step 2/6. Catalyzes the dehydration of methylthioribulose-1-phosphate (MTRu-1-P) into 2,3-diketo-5-methylthiopentyl-1-phosphate (DK-MTP-1-P). In Talaromyces stipitatus (strain ATCC 10500 / CBS 375.48 / QM 6759 / NRRL 1006) (Penicillium stipitatum), this protein is Methylthioribulose-1-phosphate dehydratase.